The sequence spans 215 residues: Thymidylate kinase (215 aa).

An ATP-binding site is contributed by 12–19 (GIDGAGKS).

Belongs to the thymidylate kinase family.

It carries out the reaction dTMP + ATP = dTDP + ADP. Functionally, phosphorylation of dTMP to form dTDP in both de novo and salvage pathways of dTTP synthesis. The sequence is that of Thymidylate kinase from Albidiferax ferrireducens (strain ATCC BAA-621 / DSM 15236 / T118) (Rhodoferax ferrireducens).